A 915-amino-acid polypeptide reads, in one-letter code: Coiled-coil domain-containing protein 57 (915 aa).

Positions 1 to 502 are centrosomal targeting domain; it reads MLPLGSEPAL…MHGLPRPGAQ (502 aa). Coiled coils occupy residues 92–173, 214–422, 456–483, and 521–548; these read VSEL…QRQE, LEAL…LERD, KSQVAAKLQETEQALQEQEVVLKAVTLE, and IQRLREQNTSLRNAIAQMRKEMEALSHQ. Disordered stretches follow at residues 555 to 574, 606 to 653, and 724 to 915; these read TAAESTDANQPDPEAGGDAA, PLKM…QAGP, and QHGG…NIMD. The microtubule binding domain stretch occupies residues 606-915; that stretch reads PLKMSSPHAE…PKIRNYNIMD (310 aa). The span at 613-627 shows a compositional bias: polar residues; it reads HAESQPSVRTSTETT. A compositionally biased stretch (low complexity) spans 628–652; the sequence is GGSAQAGQAGGSVQAGQAGGSVQAG. The span at 745 to 758 shows a compositional bias: basic and acidic residues; that stretch reads GREDAKSAEDEAPS. 3 stretches are compositionally biased toward polar residues: residues 781-794, 819-830, and 841-852; these read PKTQHSIHTVTCKS, SHSSSSFASGTL, and SSPSGVTSQGDS. Over residues 879 to 891 the composition is skewed to low complexity; that stretch reads KTAAQAKAKTTGA.

Interacts with CEP63; the interaction is required for their location to proximal end of centrioles. Interacts with microtubules.

The protein localises to the cytoplasm. It is found in the cytoskeleton. It localises to the microtubule organizing center. Its subcellular location is the centrosome. The protein resides in the centriolar satellite. The protein localises to the centriole. It is found in the spindle. In terms of biological role, pleiotropic regulator of centriole duplication, mitosis, and ciliogenesis. Critical interface between centrosome and microtubule-mediated cellular processes. Centriole duplication protein required for recruitment of CEP63, CEP152, and PLK4 to the centrosome. Independent of its centrosomal targeting, localizes to and interacts with microtubules and regulates microtubule nucleation, stability, and mitotic progression. This is Coiled-coil domain-containing protein 57 from Homo sapiens (Human).